Here is a 300-residue protein sequence, read N- to C-terminus: Arginine/serine-rich protein 1 (300 aa).

The interval 1 to 142 (MSSAAVSKYV…RGRSHHRRSY (142 aa)) is disordered. The residue at position 17 (Ser17) is a Phosphoserine. A compositionally biased stretch (low complexity) spans 23–36 (SPSTSGSGRSSRLS). Over residues 37 to 104 (SRSRSRSSSR…RSRSRSRGHR (68 aa)) the composition is skewed to basic residues. Residues 105 to 115 (YYRDSRYEQPR) show a composition bias toward basic and acidic residues. Over residues 116–125 (RYYQSPSPYR) the composition is skewed to low complexity. Phosphoserine occurs at positions 120 and 122. Residues 126 to 141 (SRSRSRSRGRSHHRRS) are compositionally biased toward basic residues. Omega-N-methylarginine is present on Arg147. Positions 222-300 (QGAVSCSGPK…KSPYGLWIPV (79 aa)) are disordered. Residues 268-277 (PLEKTTKAAV) show a composition bias toward basic and acidic residues. Ser284 carries the post-translational modification Phosphoserine.

Belongs to the RSRP family. In terms of processing, phosphorylated. Phosphorylation at Ser-120 and Ser-122 mediates the interaction with spliceosome proteins.

It is found in the nucleus. Its function is as follows. Probably acts as a spliceosomal factor that contributes to spliceosome assembly and regulates the isoform switching of proteins such as PARP6. The chain is Arginine/serine-rich protein 1 (Rsrp1) from Rattus norvegicus (Rat).